Here is a 266-residue protein sequence, read N- to C-terminus: GTP cyclohydrolase III (266 aa).

Belongs to the archaeal-type GTP cyclohydrolase family.

The catalysed reaction is GTP + 3 H2O = 2-amino-5-formylamino-6-(5-phospho-D-ribosylamino)pyrimidin-4(3H)-one + 2 phosphate + 2 H(+). Catalyzes the formation of 2-amino-5-formylamino-6-ribofuranosylamino-4(3H)-pyrimidinone ribonucleotide monophosphate and inorganic phosphate from GTP. Also has an independent pyrophosphate phosphohydrolase activity. This Methanococcus maripaludis (strain DSM 14266 / JCM 13030 / NBRC 101832 / S2 / LL) protein is GTP cyclohydrolase III.